The primary structure comprises 104 residues: Pyrimidine/purine nucleoside phosphorylase (104 aa).

It belongs to the nucleoside phosphorylase PpnP family.

It carries out the reaction a purine D-ribonucleoside + phosphate = a purine nucleobase + alpha-D-ribose 1-phosphate. The enzyme catalyses adenosine + phosphate = alpha-D-ribose 1-phosphate + adenine. The catalysed reaction is cytidine + phosphate = cytosine + alpha-D-ribose 1-phosphate. It catalyses the reaction guanosine + phosphate = alpha-D-ribose 1-phosphate + guanine. It carries out the reaction inosine + phosphate = alpha-D-ribose 1-phosphate + hypoxanthine. The enzyme catalyses thymidine + phosphate = 2-deoxy-alpha-D-ribose 1-phosphate + thymine. The catalysed reaction is uridine + phosphate = alpha-D-ribose 1-phosphate + uracil. It catalyses the reaction xanthosine + phosphate = alpha-D-ribose 1-phosphate + xanthine. In terms of biological role, catalyzes the phosphorolysis of diverse nucleosides, yielding D-ribose 1-phosphate and the respective free bases. Can use uridine, adenosine, guanosine, cytidine, thymidine, inosine and xanthosine as substrates. Also catalyzes the reverse reactions. The chain is Pyrimidine/purine nucleoside phosphorylase from Leptospira borgpetersenii serovar Hardjo-bovis (strain L550).